The chain runs to 375 residues: Lipid-A-disaccharide synthase (375 aa).

This sequence belongs to the LpxB family.

It carries out the reaction a lipid X + a UDP-2-N,3-O-bis[(3R)-3-hydroxyacyl]-alpha-D-glucosamine = a lipid A disaccharide + UDP + H(+). It participates in bacterial outer membrane biogenesis; LPS lipid A biosynthesis. Condensation of UDP-2,3-diacylglucosamine and 2,3-diacylglucosamine-1-phosphate to form lipid A disaccharide, a precursor of lipid A, a phosphorylated glycolipid that anchors the lipopolysaccharide to the outer membrane of the cell. This is Lipid-A-disaccharide synthase from Pseudomonas putida (strain ATCC 47054 / DSM 6125 / CFBP 8728 / NCIMB 11950 / KT2440).